The chain runs to 120 residues: UPF0102 protein HSM_1206 (120 aa).

The protein belongs to the UPF0102 family.

The chain is UPF0102 protein HSM_1206 from Histophilus somni (strain 2336) (Haemophilus somnus).